We begin with the raw amino-acid sequence, 293 residues long: MSALDNRLFAKMNGIGNEIVVVDLRDQPAPVTPDDARAVAAHLPYDQLMLLQPARLPGTEAFVRIYNNDGSEAGACGNGMRCVARQMFASTDKQGLTFETRAGLLNCWRGPADGLYTVDMGEPKFGWKDIPLAEEFRDTRSIELQIGPIDAPLLHTPSVVSMGNPHAIFWVDDIEAHDLGRFGPLLENHPIFPERANITLAHIVDRDHITMRTWERGAGLTRACGSAACATAVAAARLKRADRVVEMTLPGGQLSIAWRESDNHVLMTGGATFEFEGRFDPALFARSRDKTSA.

Positions 17, 47, and 67 each coordinate substrate. Cys76 (proton donor) is an active-site residue. Residues 77-78 (GN), Asn164, Asn197, and 215-216 (ER) contribute to the substrate site. Catalysis depends on Cys224, which acts as the Proton acceptor. Substrate is bound at residue 225–226 (GS).

The protein belongs to the diaminopimelate epimerase family. Homodimer.

It is found in the cytoplasm. The catalysed reaction is (2S,6S)-2,6-diaminopimelate = meso-2,6-diaminopimelate. The protein operates within amino-acid biosynthesis; L-lysine biosynthesis via DAP pathway; DL-2,6-diaminopimelate from LL-2,6-diaminopimelate: step 1/1. In terms of biological role, catalyzes the stereoinversion of LL-2,6-diaminopimelate (L,L-DAP) to meso-diaminopimelate (meso-DAP), a precursor of L-lysine and an essential component of the bacterial peptidoglycan. This chain is Diaminopimelate epimerase, found in Rhodopseudomonas palustris (strain BisB5).